A 477-amino-acid polypeptide reads, in one-letter code: Aspartyl/glutamyl-tRNA(Asn/Gln) amidotransferase subunit B (477 aa).

It belongs to the GatB/GatE family. GatB subfamily. Heterotrimer of A, B and C subunits.

The enzyme catalyses L-glutamyl-tRNA(Gln) + L-glutamine + ATP + H2O = L-glutaminyl-tRNA(Gln) + L-glutamate + ADP + phosphate + H(+). It carries out the reaction L-aspartyl-tRNA(Asn) + L-glutamine + ATP + H2O = L-asparaginyl-tRNA(Asn) + L-glutamate + ADP + phosphate + 2 H(+). Its function is as follows. Allows the formation of correctly charged Asn-tRNA(Asn) or Gln-tRNA(Gln) through the transamidation of misacylated Asp-tRNA(Asn) or Glu-tRNA(Gln) in organisms which lack either or both of asparaginyl-tRNA or glutaminyl-tRNA synthetases. The reaction takes place in the presence of glutamine and ATP through an activated phospho-Asp-tRNA(Asn) or phospho-Glu-tRNA(Gln). This is Aspartyl/glutamyl-tRNA(Asn/Gln) amidotransferase subunit B from Ureaplasma parvum serovar 3 (strain ATCC 27815 / 27 / NCTC 11736).